Reading from the N-terminus, the 392-residue chain is MNKIIAANQTLTSEAVSEGHPDKIADQISDAILDEILKEDKNAKVACEVIIAQNLVVIAGEINSPVKKNIDIKEVAKNIIKDIGYTNIDYGLDYKTITVIDAIGNQSRDIINAIEKKGSNALGAGDQGIIFGYACDETKNFLPAPYELANSILKKASNLRKSGAIKWLRPDSKSQVTIEYDKNRNPVKIKNIIVSHQHHPNISQKLIQQTIIEEIIKPTVQDKSMLDENTAYCINPSGNFVIGGPTGDTGLTGRKIIADSYGGFARHGGGAYSGKDATKVDRSAAYMARYIAKNMVAAGISKEFELQLAYAIGIENPISIQITGGINDPKYANKILNFIVNNFDLTPNGIIEKLKLKQPIYLKTCTYGHFGKNEFEWEKLDFVKKIQTALKK.

Residue histidine 20 coordinates ATP. Aspartate 22 contacts Mg(2+). Position 48 (glutamate 48) interacts with K(+). Residues glutamate 61 and glutamine 106 each contribute to the L-methionine site. The interval 106 to 116 (QSRDIINAIEK) is flexible loop. ATP-binding positions include 171–173 (DSK), aspartate 248, 254–255 (RK), alanine 271, and lysine 275. Aspartate 248 is an L-methionine binding site. Lysine 279 contacts L-methionine.

It belongs to the AdoMet synthase family. In terms of assembly, homotetramer; dimer of dimers. The cofactor is Mg(2+). Requires K(+) as cofactor.

Its subcellular location is the cytoplasm. The enzyme catalyses L-methionine + ATP + H2O = S-adenosyl-L-methionine + phosphate + diphosphate. It functions in the pathway amino-acid biosynthesis; S-adenosyl-L-methionine biosynthesis; S-adenosyl-L-methionine from L-methionine: step 1/1. Catalyzes the formation of S-adenosylmethionine (AdoMet) from methionine and ATP. The overall synthetic reaction is composed of two sequential steps, AdoMet formation and the subsequent tripolyphosphate hydrolysis which occurs prior to release of AdoMet from the enzyme. This is S-adenosylmethionine synthase from Borreliella burgdorferi (strain ATCC 35210 / DSM 4680 / CIP 102532 / B31) (Borrelia burgdorferi).